The sequence spans 513 residues: MNNNVITRFAPSPTGFLHIGSARTALFNYLFARHHNGKFLLRIEDTDKERSTKEAVEAIFSGLKWLGLDWNGEVIFQSKRNNLYKEAALKLLQNGKAYYCFTRQEEIERQRQQALENKQHFIFNSEWRDKDPSIYPTDIKPVIRLKTPREGSITIHDTLQGEVVIENSHIDDMVLLRADGTATYMLAVVVDDHDMGITHIIRGNDHLTNAARQLAIYQAFGYAVPSMTHIPLIHGADGAKLSKRHGALGIEAYKDMGYLPESLCNYLLRLGWSHGDDEIISMTQAIDWFNLDSLGKSPAKLDFAKMNSLNSHYLRMLDNDSLTSKIVEILEQNYNKLLQKLAYREEFGGNTERSTAAYIDIREDASTGLTYKLPLAVELPKKFKVSEQEIGYIKQAMPSLLVRSETLLELTRLAQIYLVDSPIIYSQDSKEIIENCDKNLIKQIIENLSELEQFDKESVQNKFKEIAAANDLKLNDIMKPVRALITGMTASPSVFEIAEILGKENILKRLKII.

Residues Pro11–Ser21 carry the 'HIGH' region motif. The 'KMSKS' region signature appears at Lys240–Arg244. Lys243 contributes to the ATP binding site.

This sequence belongs to the class-I aminoacyl-tRNA synthetase family. Glutamate--tRNA ligase type 1 subfamily. Monomer.

The protein localises to the cytoplasm. The enzyme catalyses tRNA(Glu) + L-glutamate + ATP = L-glutamyl-tRNA(Glu) + AMP + diphosphate. Functionally, catalyzes the attachment of glutamate to tRNA(Glu) in a two-step reaction: glutamate is first activated by ATP to form Glu-AMP and then transferred to the acceptor end of tRNA(Glu). The protein is Glutamate--tRNA ligase 2 of Rickettsia rickettsii (strain Iowa).